Consider the following 261-residue polypeptide: Hydroxyethylthiazole kinase (261 aa).

Residue M45 coordinates substrate. The ATP site is built by R121 and S167. G194 is a substrate binding site.

The protein belongs to the Thz kinase family. The cofactor is Mg(2+).

It carries out the reaction 5-(2-hydroxyethyl)-4-methylthiazole + ATP = 4-methyl-5-(2-phosphooxyethyl)-thiazole + ADP + H(+). The protein operates within cofactor biosynthesis; thiamine diphosphate biosynthesis; 4-methyl-5-(2-phosphoethyl)-thiazole from 5-(2-hydroxyethyl)-4-methylthiazole: step 1/1. Catalyzes the phosphorylation of the hydroxyl group of 4-methyl-5-beta-hydroxyethylthiazole (THZ). This is Hydroxyethylthiazole kinase from Vibrio atlanticus (strain LGP32) (Vibrio splendidus (strain Mel32)).